The following is a 227-amino-acid chain: Exodeoxyribonuclease (227 aa).

The enzyme catalyses Exonucleolytic cleavage in the 3'- to 5'-direction to yield nucleoside 5'-phosphates.. 3'-5' exonuclease that preferentially uses ssDNA as substrate. Plays a role in group I intron homing. May play a role in the final step of host DNA degradation, by scavenging DNA into mononucleotides. The chain is Exodeoxyribonuclease (dexA) from Escherichia coli (Bacteriophage T4).